Reading from the N-terminus, the 55-residue chain is Large ribosomal subunit protein bL33 (55 aa).

This sequence belongs to the bacterial ribosomal protein bL33 family.

The protein is Large ribosomal subunit protein bL33 of Rhizorhabdus wittichii (strain DSM 6014 / CCUG 31198 / JCM 15750 / NBRC 105917 / EY 4224 / RW1) (Sphingomonas wittichii).